The chain runs to 134 residues: D-ribose pyranase (134 aa).

The Proton donor role is filled by histidine 20. Substrate contacts are provided by residues aspartate 28, histidine 101, and 123-125 (YCN).

It belongs to the RbsD / FucU family. RbsD subfamily. In terms of assembly, homodecamer.

The protein resides in the cytoplasm. It catalyses the reaction beta-D-ribopyranose = beta-D-ribofuranose. The protein operates within carbohydrate metabolism; D-ribose degradation; D-ribose 5-phosphate from beta-D-ribopyranose: step 1/2. Its function is as follows. Catalyzes the interconversion of beta-pyran and beta-furan forms of D-ribose. In Pseudomonas fluorescens (strain ATCC BAA-477 / NRRL B-23932 / Pf-5), this protein is D-ribose pyranase.